We begin with the raw amino-acid sequence, 171 residues long: Protein GrpE (171 aa).

Positions 1–22 are disordered; the sequence is MNHEQPDIESQQSAADAAATAG.

Belongs to the GrpE family. As to quaternary structure, homodimer.

The protein resides in the cytoplasm. Functionally, participates actively in the response to hyperosmotic and heat shock by preventing the aggregation of stress-denatured proteins, in association with DnaK and GrpE. It is the nucleotide exchange factor for DnaK and may function as a thermosensor. Unfolded proteins bind initially to DnaJ; upon interaction with the DnaJ-bound protein, DnaK hydrolyzes its bound ATP, resulting in the formation of a stable complex. GrpE releases ADP from DnaK; ATP binding to DnaK triggers the release of the substrate protein, thus completing the reaction cycle. Several rounds of ATP-dependent interactions between DnaJ, DnaK and GrpE are required for fully efficient folding. In Stenotrophomonas maltophilia (strain K279a), this protein is Protein GrpE.